The primary structure comprises 238 residues: 2-phytyl-1,4-naphtoquinone methyltransferase (238 aa).

Belongs to the class I-like SAM-binding methyltransferase superfamily. MenG/UbiE family.

The catalysed reaction is demethylphylloquinol + S-adenosyl-L-methionine = phylloquinol + S-adenosyl-L-homocysteine + H(+). The protein operates within cofactor biosynthesis; phylloquinone biosynthesis. Functionally, methyltransferase required for the conversion of 2-phytyl-1,4-beta-naphthoquinol to phylloquinol. This chain is 2-phytyl-1,4-naphtoquinone methyltransferase, found in Synechocystis sp. (strain ATCC 27184 / PCC 6803 / Kazusa).